Consider the following 357-residue polypeptide: 3-isopropylmalate dehydrogenase (357 aa).

Residue 76–89 (GPKWDNEPSHNRPE) participates in NAD(+) binding. Arg-96, Arg-106, Arg-135, and Asp-223 together coordinate substrate. The Mg(2+) site is built by Asp-223, Asp-247, and Asp-251. 281–293 (GSAPDIAGQDKAN) provides a ligand contact to NAD(+).

The protein belongs to the isocitrate and isopropylmalate dehydrogenases family. LeuB type 1 subfamily. As to quaternary structure, homodimer. Mg(2+) serves as cofactor. The cofactor is Mn(2+).

Its subcellular location is the cytoplasm. The catalysed reaction is (2R,3S)-3-isopropylmalate + NAD(+) = 4-methyl-2-oxopentanoate + CO2 + NADH. It participates in amino-acid biosynthesis; L-leucine biosynthesis; L-leucine from 3-methyl-2-oxobutanoate: step 3/4. Functionally, catalyzes the oxidation of 3-carboxy-2-hydroxy-4-methylpentanoate (3-isopropylmalate) to 3-carboxy-4-methyl-2-oxopentanoate. The product decarboxylates to 4-methyl-2 oxopentanoate. The chain is 3-isopropylmalate dehydrogenase from Helicobacter hepaticus (strain ATCC 51449 / 3B1).